The primary structure comprises 876 residues: Alanine--tRNA ligase (876 aa).

Lys-74 bears the N6-acetyllysine mark. Zn(2+)-binding residues include His-564, His-568, Cys-666, and His-670.

It belongs to the class-II aminoacyl-tRNA synthetase family. In terms of assembly, homotetramer. It depends on Zn(2+) as a cofactor.

The protein resides in the cytoplasm. The catalysed reaction is tRNA(Ala) + L-alanine + ATP = L-alanyl-tRNA(Ala) + AMP + diphosphate. Functionally, catalyzes the attachment of alanine to tRNA(Ala) in a two-step reaction: alanine is first activated by ATP to form Ala-AMP and then transferred to the acceptor end of tRNA(Ala). Also edits incorrectly charged Ser-tRNA(Ala) and Gly-tRNA(Ala) via its editing domain. The sequence is that of Alanine--tRNA ligase from Shigella flexneri serotype 5b (strain 8401).